The primary structure comprises 247 residues: ATP synthase subunit a, chloroplastic (247 aa).

The next 5 helical transmembrane spans lie at 36–56, 95–115, 134–154, 199–219, and 220–240; these read GQVL…SIFG, VPFI…GALV, INTT…AGFS, LVVG…LMLL, and GLFT…AYIG.

Belongs to the ATPase A chain family. As to quaternary structure, F-type ATPases have 2 components, CF(1) - the catalytic core - and CF(0) - the membrane proton channel. CF(1) has five subunits: alpha(3), beta(3), gamma(1), delta(1), epsilon(1). CF(0) has four main subunits: a, b, b' and c.

The protein localises to the plastid. It is found in the chloroplast thylakoid membrane. Functionally, key component of the proton channel; it plays a direct role in the translocation of protons across the membrane. The sequence is that of ATP synthase subunit a, chloroplastic from Mesostigma viride (Green alga).